The following is a 216-amino-acid chain: Probable nicotinate-nucleotide adenylyltransferase (216 aa).

Belongs to the NadD family.

It carries out the reaction nicotinate beta-D-ribonucleotide + ATP + H(+) = deamido-NAD(+) + diphosphate. Its pathway is cofactor biosynthesis; NAD(+) biosynthesis; deamido-NAD(+) from nicotinate D-ribonucleotide: step 1/1. Catalyzes the reversible adenylation of nicotinate mononucleotide (NaMN) to nicotinic acid adenine dinucleotide (NaAD). This Geotalea uraniireducens (strain Rf4) (Geobacter uraniireducens) protein is Probable nicotinate-nucleotide adenylyltransferase.